Reading from the N-terminus, the 137-residue chain is Large ribosomal subunit protein uL16 (137 aa).

Belongs to the universal ribosomal protein uL16 family. In terms of assembly, part of the 50S ribosomal subunit.

Binds 23S rRNA and is also seen to make contacts with the A and possibly P site tRNAs. The polypeptide is Large ribosomal subunit protein uL16 (Mycoplasma mycoides subsp. mycoides SC (strain CCUG 32753 / NCTC 10114 / PG1)).